Reading from the N-terminus, the 174-residue chain is Neuromedin-U (174 aa).

An N-terminal signal peptide occupies residues 1 to 37; it reads MSRAANRRPGLSAGQLAAATASPLLSLLLLLACCADA. The propeptide occupies 38–105; sequence CRGTPISPQR…EQTEKDNAKR (68 aa). A Methionine sulfoxide; partial modification is found at methionine 141. Residue asparagine 166 is modified to Asparagine amide. A propeptide spanning residues 170–174 is cleaved from the precursor; sequence STSFI.

This sequence belongs to the NmU family. In terms of tissue distribution, expressed throughout the gastrointestinal tract with highest levels in the duodenum and jejunum. Low levels in spinal cord, hypothalamus, and stomach. Neuromedin-U-23: Expressed in the small intestine and the pituitary gland (at protein level). Neuromedin precursor-related peptides: Expressed in pituitary gland and small intestine (at protein level).

Its subcellular location is the secreted. In terms of biological role, ligand for receptors NMUR1 and NMUR2. Receptor-binding is very tight if not irreversible and triggers an increase in the cytosolic Ca(2+) concentration. Stimulates muscle contractions of specific regions of the gastrointestinal tract. In rat, NMU stimulates contractions of stomach circular muscle. Functionally, does not function as a ligand for either NMUR1 or NMUR2. Indirectly induces prolactin release although its potency is much lower than that of neuromedin precursor-related peptide 36. Does not function as a ligand for either NMUR1 or NMUR2. Indirectly induces prolactin release from lactotroph cells in the pituitary gland, probably via the hypothalamic dopaminergic system. The chain is Neuromedin-U (Nmu) from Rattus norvegicus (Rat).